Reading from the N-terminus, the 510-residue chain is MIPVSLVVVVVGGWTAVYLADLVLKSSVYFKHSYEDWLEKNGLSISPFHIRWQTSVFNRAFYSWGRRKARMLYQWFNFGMVFGVIAMFSSFFLLGKTLMQTLAQMMADSPSSSSSSSSSSSSSSSSSIHNEQVLQVVVPGINLPVNQLTYFFAAVLISGVVHEIGHGIAAIREQVRFNGFGIFLFIIYPGAFVDLFTTHLQLISPVQQLRIFCAGIWHNFVLALLGILALVLLPVILLPFYYTGVGVLITEVAEDSPAIGPRGLFVGDLVTHLQDCPVTNVQDWNECLDTIAYEPQIGYCISASTLQQLSFPVRAYKRLDGSTECCNNHSLTDVCFSYRNNFNKRLHTCLPARKAVEATQVCRTNKDCKTSSSSSFCIVPSLETHTRLIKVKHPPQIDMLYVGHPLHLHYTVSITSFIPRFNFLSIDLPVIVETFVKYLISLSGALAIVNAVPCFALDGQWILNSFLDATLTSVIGDNDVKDLIGFFILLGGSVLLAANVTLGLWMVTAR.

At 1–3 (MIP) the chain is on the cytoplasmic side. A helical transmembrane segment spans residues 4–24 (VSLVVVVVGGWTAVYLADLVL). The Lumenal segment spans residues 25–74 (KSSVYFKHSYEDWLEKNGLSISPFHIRWQTSVFNRAFYSWGRRKARMLYQ). 2 helical membrane-spanning segments follow: residues 75–95 (WFNF…FLLG) and 96–107 (KTLMQTLAQMMA). Topologically, residues 108 to 135 (DSPSSSSSSSSSSSSSSSSSIHNEQVLQ) are lumenal. The chain crosses the membrane as a helical span at residues 136 to 160 (VVVPGINLPVNQLTYFFAAVLISGV). His-162 is a Zn(2+) binding site. The active site involves Glu-163. A run of 3 helical transmembrane segments spans residues 165-177 (GHGI…QVRF), 178-200 (NGFG…TTHL), and 220-242 (FVLA…PFYY). His-166 contacts Zn(2+). Residues 243 to 437 (TGVGVLITEV…LPVIVETFVK (195 aa)) are Lumenal-facing. A glycan (N-linked (GlcNAc...) asparagine) is linked at Asn-328. A run of 2 helical transmembrane segments spans residues 438–455 (YLIS…VPCF) and 456–467 (ALDGQWILNSFL). The Lumenal portion of the chain corresponds to 468–483 (DATLTSVIGDNDVKDL). A helical membrane pass occupies residues 484-504 (IGFFILLGGSVLLAANVTLGL). Over 505-510 (WMVTAR) the chain is Cytoplasmic.

This sequence belongs to the peptidase M50A family. Zn(2+) is required as a cofactor.

The protein localises to the membrane. The protein resides in the cytoplasm. It is found in the golgi apparatus membrane. It catalyses the reaction Cleaves several transcription factors that are type-2 transmembrane proteins within membrane-spanning domains. Known substrates include sterol regulatory element-binding protein (SREBP) -1, SREBP-2 and forms of the transcriptional activator ATF6. SREBP-2 is cleaved at the site 477-DRSRILL-|-CVLTFLCLSFNPLTSLLQWGGA-505. The residues Asn-Pro, 11 residues distal to the site of cleavage in the membrane-spanning domain, are important for cleavage by S2P endopeptidase. Replacement of either of these residues does not prevent cleavage, but there is no cleavage if both of these residues are replaced.. Zinc metalloprotease that mediates intramembrane proteolysis of proteins such as ATF6, ATF6B, SREBF1/SREBP1 and SREBF2/SREBP2. Catalyzes the second step in the proteolytic activation of the sterol regulatory element-binding proteins (SREBPs) SREBF1/SREBP1 and SREBF2/SREBP2: cleaves SREBPs within the first transmembrane segment, thereby releasing the N-terminal segment with a portion of the transmembrane segment attached. Mature N-terminal SREBP fragments shuttle to the nucleus and activate gene transcription. Also mediates the second step in the proteolytic activation of the cyclic AMP-dependent transcription factor ATF-6 (ATF6 and ATF6B). Involved in intramembrane proteolysis during bone formation. In astrocytes and osteoblasts, upon DNA damage and ER stress, mediates the second step of the regulated intramembrane proteolytic activation of the transcription factor CREB3L1, leading to the inhibition of cell-cycle progression. This is Membrane-bound transcription factor site-2 protease (MBTPS2) from Cricetulus griseus (Chinese hamster).